The following is a 186-amino-acid chain: Serine hydrolase RBBP9 (186 aa).

Residues 63–67 (LHCDE) are involved in binding to RB1. Residues S75, D138, and H165 each act as charge relay system in the active site.

This sequence belongs to the RBBP9 family. Interacts with RB1; the interaction disrupts RB1 binding to E2F1. Interacts with RBL1 and RBL2. Highly expressed in the spleen, testis and kidney. Also found in the heart, liver, lung and brain.

The catalysed reaction is valacyclovir + H2O = acyclovir + L-valine + H(+). Serine hydrolase. Catalyzes the hydrolytic activation of amino acid ester of the antiviral prodrug valacyclovir to its corresponding active drug, acyclovir. May negatively regulate basal or autocrine TGF-beta signaling by suppressing SMAD2-SMAD3 phosphorylation. May play a role in the transformation process due to its capacity to confer resistance to the growth-inhibitory effects of TGF-beta through interaction with RB1 and the subsequent displacement of E2F1. The sequence is that of Serine hydrolase RBBP9 from Rattus norvegicus (Rat).